We begin with the raw amino-acid sequence, 253 residues long: Vacuolar v-SNARE NYV1 (253 aa).

Over 1-231 the chain is Cytoplasmic; sequence MKRFNVSYVE…EIMWWQKVKN (231 aa). Residues 147–166 form a disordered region; it reads LNSSGNGQSSNGNGQNTISD. Over residues 148 to 162 the composition is skewed to low complexity; that stretch reads NSSGNGQSSNGNGQN. A v-SNARE coiled-coil homology domain is found at 167 to 227; that stretch reads IGDATEDQIK…VNIKEIMWWQ (61 aa). Residues 232–252 form a helical; Anchor for type IV membrane protein membrane-spanning segment; that stretch reads ITLLTFTIILFVSAAFMFFYL. Trp-253 is a topological domain (vacuolar).

The protein belongs to the synaptobrevin family. As to quaternary structure, present in a pentameric cis-SNARE complex composed of the v-SNAREs NYV1, VTI1 and YKT6, and the t-SNAREs VAM3 and VAM7 on vacuolar membranes. Interacts in trans with the cognate t-SNARE VAM3 during the docking step of homotypic vacuolar fusion. Interacts with the vacuolar transporter chaperone (VTC) complex and the vacuolar Ca(2+)-ATPase PMC1.

The protein localises to the vacuole membrane. Its function is as follows. Vacuolar v-SNARE required for docking. Only involved in homotypic vacuole fusion. Required for Ca(2+) efflux from the vacuolar lumen, a required signal for subsequent membrane fusion events, by inhibiting vacuolar Ca(2+)-ATPase PMC1 and promoting Ca(2+) release when forming trans-SNARE assemblies during the docking step. In Saccharomyces cerevisiae (strain ATCC 204508 / S288c) (Baker's yeast), this protein is Vacuolar v-SNARE NYV1 (NYV1).